The primary structure comprises 156 residues: Putative HTH-type transcriptional regulator YwgB (156 aa).

Positions 2 to 133 constitute an HTH rrf2-type domain; sequence KMKSGMEQAV…REESLQHVMD (132 aa).

The polypeptide is Putative HTH-type transcriptional regulator YwgB (ywgB) (Bacillus subtilis (strain 168)).